We begin with the raw amino-acid sequence, 314 residues long: Triosephosphate isomerase, chloroplastic (314 aa).

Residues 1–22 show a composition bias toward polar residues; the sequence is MAVASTSLASQLSGPKSLSQPY. Residues 1 to 25 are disordered; the sequence is MAVASTSLASQLSGPKSLSQPYSGL. The N-terminal 59 residues, 1-59, are a transit peptide targeting the chloroplast; that stretch reads MAVASTSLASQLSGPKSLSQPYSGLRRSCPKLDQSHSSLFQHLSLSSSSRKASRAVVAM. Substrate contacts are provided by Asn70 and Lys72. Catalysis depends on His154, which acts as the Electrophile. The active-site Proton acceptor is the Glu224.

Belongs to the triosephosphate isomerase family. In terms of assembly, homodimer.

Its subcellular location is the plastid. It localises to the chloroplast. The enzyme catalyses D-glyceraldehyde 3-phosphate = dihydroxyacetone phosphate. The protein operates within carbohydrate biosynthesis; Calvin cycle. This Fragaria ananassa (Strawberry) protein is Triosephosphate isomerase, chloroplastic (TPI).